The following is a 122-amino-acid chain: Large ribosomal subunit protein uL29 (122 aa).

S12 bears the Phosphoserine mark.

The protein belongs to the universal ribosomal protein uL29 family. As to quaternary structure, component of the large ribosomal subunit (LSU). Mature yeast ribosomes consist of a small (40S) and a large (60S) subunit. The 40S small subunit contains 1 molecule of ribosomal RNA (18S rRNA) and at least 33 different proteins. The large 60S subunit contains 3 rRNA molecules (25S, 5.8S and 5S rRNA) and at least 46 different proteins. uL29 is associated with the polypeptide exit tunnel.

The protein resides in the cytoplasm. It localises to the nucleus. The protein localises to the nucleolus. Component of the ribosome, a large ribonucleoprotein complex responsible for the synthesis of proteins in the cell. The small ribosomal subunit (SSU) binds messenger RNAs (mRNAs) and translates the encoded message by selecting cognate aminoacyl-transfer RNA (tRNA) molecules. The large subunit (LSU) contains the ribosomal catalytic site termed the peptidyl transferase center (PTC), which catalyzes the formation of peptide bonds, thereby polymerizing the amino acids delivered by tRNAs into a polypeptide chain. The nascent polypeptides leave the ribosome through a tunnel in the LSU and interact with protein factors that function in enzymatic processing, targeting, and the membrane insertion of nascent chains at the exit of the ribosomal tunnel. In Schizosaccharomyces pombe (strain 972 / ATCC 24843) (Fission yeast), this protein is Large ribosomal subunit protein uL29 (rpl35).